A 30-amino-acid polypeptide reads, in one-letter code: Cycloviolacin-H1 (30 aa).

Residues 1-30 constitute a cross-link (cyclopeptide (Gly-Asn)); sequence GIPCGESCVYIPCLTSAIGCSCKSKVCYRN. 3 disulfides stabilise this stretch: cysteine 4–cysteine 20, cysteine 8–cysteine 22, and cysteine 13–cysteine 27.

The protein belongs to the cyclotide family. Bracelet subfamily. In terms of processing, this is a cyclic peptide.

Probably participates in a plant defense mechanism. The sequence is that of Cycloviolacin-H1 from Viola hederacea (Australian violet).